The chain runs to 182 residues: NADH-quinone oxidoreductase subunit I (182 aa).

2 4Fe-4S ferredoxin-type domains span residues 50 to 82 (IILS…LQKA) and 92 to 121 (EFFR…MTPD). Positions 62, 65, 68, 72, 101, 104, 107, and 111 each coordinate [4Fe-4S] cluster.

This sequence belongs to the complex I 23 kDa subunit family. As to quaternary structure, NDH-1 is composed of 14 different subunits. Subunits NuoA, H, J, K, L, M, N constitute the membrane sector of the complex. [4Fe-4S] cluster serves as cofactor.

It localises to the cell inner membrane. The enzyme catalyses a quinone + NADH + 5 H(+)(in) = a quinol + NAD(+) + 4 H(+)(out). NDH-1 shuttles electrons from NADH, via FMN and iron-sulfur (Fe-S) centers, to quinones in the respiratory chain. The immediate electron acceptor for the enzyme in this species is believed to be ubiquinone. Couples the redox reaction to proton translocation (for every two electrons transferred, four hydrogen ions are translocated across the cytoplasmic membrane), and thus conserves the redox energy in a proton gradient. The chain is NADH-quinone oxidoreductase subunit I from Psychrobacter arcticus (strain DSM 17307 / VKM B-2377 / 273-4).